Consider the following 162-residue polypeptide: Small ribosomal subunit protein bS16 (162 aa).

Positions 113-162 (ADGGPTTEATKPKKKSPAKKAAKAAEPAPQPEQPDTPALGGEQAELTAES) are disordered. Residues 124 to 134 (PKKKSPAKKAA) show a composition bias toward basic residues.

Belongs to the bacterial ribosomal protein bS16 family.

The protein is Small ribosomal subunit protein bS16 of Mycobacterium tuberculosis (strain ATCC 25177 / H37Ra).